The sequence spans 328 residues: Transcription initiation factor IIB 4 (328 aa).

Basic and acidic residues-rich tracts occupy residues Met-1 to His-12 and Arg-21 to Cys-32. The segment at Met-1–Glu-47 is disordered. A TFIIB-type zinc finger spans residues Glu-28 to Glu-58. Zn(2+) is bound by residues Cys-32, Cys-35, Cys-50, and Cys-53. Repeat copies occupy residues Gly-144–Leu-227 and Ser-238–Asp-319.

This sequence belongs to the TFIIB family.

In terms of biological role, stabilizes TBP binding to an archaeal box-A promoter. Also responsible for recruiting RNA polymerase II to the pre-initiation complex (DNA-TBP-TFIIB). This chain is Transcription initiation factor IIB 4, found in Halobacterium salinarum (strain ATCC 700922 / JCM 11081 / NRC-1) (Halobacterium halobium).